We begin with the raw amino-acid sequence, 168 residues long: Small ribosomal subunit protein uS5 (168 aa).

An S5 DRBM domain is found at 13–76; the sequence is LQEKLIAVNR…EKARRNMVTV (64 aa).

This sequence belongs to the universal ribosomal protein uS5 family. In terms of assembly, part of the 30S ribosomal subunit. Contacts proteins S4 and S8.

Functionally, with S4 and S12 plays an important role in translational accuracy. Its function is as follows. Located at the back of the 30S subunit body where it stabilizes the conformation of the head with respect to the body. The chain is Small ribosomal subunit protein uS5 from Shewanella amazonensis (strain ATCC BAA-1098 / SB2B).